The following is a 70-amino-acid chain: Beta-defensin 107A (70 aa).

Residues Met-1–Thr-26 form the signal peptide. 2 cysteine pairs are disulfide-bonded: Cys-41-Cys-55 and Cys-45-Cys-64.

It belongs to the beta-defensin family.

The protein localises to the secreted. In terms of biological role, has antibacterial activity. This is Beta-defensin 107A (DEFB107A) from Pan troglodytes (Chimpanzee).